A 465-amino-acid chain; its full sequence is MRGASGESVLPEDLRSRVLERIRPTRLQFSMLGRLYSLVARALEECEDLRLSIPSYRVELVGSAAKGTLLRDKWEVDVFLLLDAPREEVRRLGESLLRSCLGGRLPYYFKYSEHPYATVSLMGMQADVVPAPLAVDPRDAVGVERTPFHTRYVRSRLEERPWLVDDILLFKSFLKGIGVYGAETRVGGFSGYLAEVLIIHHGGFEETVKAASSWRPPVMVDTTSGKADLDMLARRYPDSPIIVPDPVDPSRNTAASVTPKRLAELVHAANIFLRKPSPTFFHALQPGEPCRRTLPGVMVLMSGNYSDHPPDSVWGRLKRLGERLYRATKARGYPALSYSFYTDEALEAAVYIHMESPSRYPIEGRLGPPPWERERAARFTEKRLGEGGWVWIGDDGRLSGARPYTGSAAGDVERALATLPLPPGTRSYKVVTCPSTGPCGFPSYLEALRDPTPPWLRHVLGGCRS.

Ser63 and Lys66 together coordinate ATP. Ser63 and Lys66 together coordinate CTP. Residues Glu75, Asp77, and Asp127 each contribute to the Mg(2+) site. His149, Lys171, and Tyr180 together coordinate ATP. CTP is bound by residues His149, Lys171, and Tyr180.

It belongs to the tRNA nucleotidyltransferase/poly(A) polymerase family. Archaeal CCA-adding enzyme subfamily. Homodimer. Mg(2+) is required as a cofactor.

The enzyme catalyses a tRNA precursor + 2 CTP + ATP = a tRNA with a 3' CCA end + 3 diphosphate. It carries out the reaction a tRNA with a 3' CCA end + 2 CTP + ATP = a tRNA with a 3' CCACCA end + 3 diphosphate. Functionally, catalyzes the addition and repair of the essential 3'-terminal CCA sequence in tRNAs without using a nucleic acid template. Adds these three nucleotides in the order of C, C, and A to the tRNA nucleotide-73, using CTP and ATP as substrates and producing inorganic pyrophosphate. tRNA 3'-terminal CCA addition is required both for tRNA processing and repair. Also involved in tRNA surveillance by mediating tandem CCA addition to generate a CCACCA at the 3' terminus of unstable tRNAs. While stable tRNAs receive only 3'-terminal CCA, unstable tRNAs are marked with CCACCA and rapidly degraded. This chain is CCA-adding enzyme, found in Aeropyrum pernix (strain ATCC 700893 / DSM 11879 / JCM 9820 / NBRC 100138 / K1).